Reading from the N-terminus, the 483-residue chain is Aspartyl/glutamyl-tRNA(Asn/Gln) amidotransferase subunit B (483 aa).

This sequence belongs to the GatB/GatE family. GatB subfamily. As to quaternary structure, heterotrimer of A, B and C subunits.

It carries out the reaction L-glutamyl-tRNA(Gln) + L-glutamine + ATP + H2O = L-glutaminyl-tRNA(Gln) + L-glutamate + ADP + phosphate + H(+). The catalysed reaction is L-aspartyl-tRNA(Asn) + L-glutamine + ATP + H2O = L-asparaginyl-tRNA(Asn) + L-glutamate + ADP + phosphate + 2 H(+). Allows the formation of correctly charged Asn-tRNA(Asn) or Gln-tRNA(Gln) through the transamidation of misacylated Asp-tRNA(Asn) or Glu-tRNA(Gln) in organisms which lack either or both of asparaginyl-tRNA or glutaminyl-tRNA synthetases. The reaction takes place in the presence of glutamine and ATP through an activated phospho-Asp-tRNA(Asn) or phospho-Glu-tRNA(Gln). This chain is Aspartyl/glutamyl-tRNA(Asn/Gln) amidotransferase subunit B, found in Rickettsia bellii (strain RML369-C).